The sequence spans 603 residues: MVMKQTKQTNILAGAAVIKVLEAWGVDHLYGIPGGSINSIMDALSAERDRIHYIQVRHEEVGAMAAAADAKLTGKIGVCFGSAGPGGTHLMNGLYDAREDHVPVLALIGQFGTTGMNMDTFQEMNENPIYADVADYNVTAVNAATLPHVIDEAIRRAYAHQGVAVVQIPVDLPWQQIPAEDWYASANSYQTPLLPEPDVQAVTRLTQTLLAAERPLIYYGIGARKAGKELEQLSKTLKIPLMSTYPAKGIVADRYPAYLGSANRVAQKPANEALAQADVVLFVGNNYPFAEVSKAFKNTRYFLQIDIDPAKLGKRHKTDIAVLADAQKTLAAILAQVSERESTPWWQANLANVKNWRAYLASLEDKQEGPLQAYQVLRAVNKIAEPDAIYSIDVGDINLNANRHLKLTPSNRHITSNLFATMGVGIPGAIAAKLNYPERQVFNLAGDGGASMTMQDLATQVQYHLPVINVVFTNCQYGFIKDEQEDTNQNDFIGVEFNDIDFSKIADGVHMQAFRVNKIEQLPDVFEQAKAIAQHEPVLIDAVITGDRPLPAEKLRLDSATSSAADIEAFKQRYEAQDLQPLSTYLKQFGLDDLQHQIGQGGF.

The segment at Met1 to Thr191 is core. The segment at Pro192–Ser342 is FAD-binding. Residues Thr343 to Phe603 form a thiamine pyrophosphate binding region. Mg(2+)-binding residues include Asp447, Asn474, and Gln476.

The protein belongs to the TPP enzyme family. In terms of assembly, homotetramer. FAD is required as a cofactor. It depends on Mg(2+) as a cofactor. The cofactor is thiamine diphosphate.

It catalyses the reaction pyruvate + phosphate + O2 + H(+) = acetyl phosphate + H2O2 + CO2. In terms of biological role, important for the aerobic growth. Decarboxylates pyruvate in four steps. The energy released is partially stored in acetyl phosphate. The sequence is that of Pyruvate oxidase (pox5) from Lactiplantibacillus plantarum (strain ATCC BAA-793 / NCIMB 8826 / WCFS1) (Lactobacillus plantarum).